The primary structure comprises 171 residues: MQKQNSFTFEELLSCGRGEMFGEGNAQLPLPPMLMFDRIVSITEEGGQYGNGQIVAELDVRPDLWFFNCHFAGDPVMPGCLGLDAMWQLVGFYLGWMGGKGRGRALGAGDVKFTGQVLPTGKLITYRIDLKRVIMRKLVMGIADAHMEIDGREIYVASDLRVGLFTRTDNF.

Residue His-70 is part of the active site.

It belongs to the thioester dehydratase family. FabA subfamily. In terms of assembly, homodimer.

It localises to the cytoplasm. It catalyses the reaction a (3R)-hydroxyacyl-[ACP] = a (2E)-enoyl-[ACP] + H2O. The catalysed reaction is (3R)-hydroxydecanoyl-[ACP] = (2E)-decenoyl-[ACP] + H2O. The enzyme catalyses (2E)-decenoyl-[ACP] = (3Z)-decenoyl-[ACP]. It functions in the pathway lipid metabolism; fatty acid biosynthesis. In terms of biological role, necessary for the introduction of cis unsaturation into fatty acids. Catalyzes the dehydration of (3R)-3-hydroxydecanoyl-ACP to E-(2)-decenoyl-ACP and then its isomerization to Z-(3)-decenoyl-ACP. Can catalyze the dehydratase reaction for beta-hydroxyacyl-ACPs with saturated chain lengths up to 16:0, being most active on intermediate chain length. The polypeptide is 3-hydroxydecanoyl-[acyl-carrier-protein] dehydratase (Methylobacillus flagellatus (strain ATCC 51484 / DSM 6875 / VKM B-1610 / KT)).